Here is a 356-residue protein sequence, read N- to C-terminus: tRNA N6-adenosine threonylcarbamoyltransferase (356 aa).

Histidine 115 and histidine 119 together coordinate Fe cation. Substrate-binding positions include 138-142, aspartate 171, glycine 184, and asparagine 277; that span reads LVSGG. Fe cation is bound at residue aspartate 305.

It belongs to the KAE1 / TsaD family. It depends on Fe(2+) as a cofactor.

The protein localises to the cytoplasm. The enzyme catalyses L-threonylcarbamoyladenylate + adenosine(37) in tRNA = N(6)-L-threonylcarbamoyladenosine(37) in tRNA + AMP + H(+). Its function is as follows. Required for the formation of a threonylcarbamoyl group on adenosine at position 37 (t(6)A37) in tRNAs that read codons beginning with adenine. Is involved in the transfer of the threonylcarbamoyl moiety of threonylcarbamoyl-AMP (TC-AMP) to the N6 group of A37, together with TsaE and TsaB. TsaD likely plays a direct catalytic role in this reaction. In Polaromonas naphthalenivorans (strain CJ2), this protein is tRNA N6-adenosine threonylcarbamoyltransferase.